Consider the following 448-residue polypeptide: Elongation factor 1-alpha (448 aa).

The tr-type G domain occupies 5-230 (KIHISIVVIG…DQINEPKRPS (226 aa)). Residues 14-21 (GHVDSGKS) form a G1 region. 14 to 21 (GHVDSGKS) serves as a coordination point for GTP. Lys-55 is modified (N6,N6-dimethyllysine). Residues 70–74 (GITID) are G2. Lys-79 is modified (N6,N6,N6-trimethyllysine). The tract at residues 91–94 (DAPG) is G3. GTP contacts are provided by residues 91–95 (DAPGH) and 153–156 (NKMD). The interval 153–156 (NKMD) is G4. N6,N6,N6-trimethyllysine is present on Lys-187. Positions 194–196 (SGF) are G5. Lys-261 bears the N6-methyllysine mark. Glu-289 carries the 5-glutamyl glycerylphosphorylethanolamine modification. The residue at position 306 (Lys-306) is an N6,N6,N6-trimethyllysine. At Glu-362 the chain carries 5-glutamyl glycerylphosphorylethanolamine. Lys-396 carries the N6,N6,N6-trimethyllysine modification.

Belongs to the TRAFAC class translation factor GTPase superfamily. Classic translation factor GTPase family. EF-Tu/EF-1A subfamily.

The protein resides in the cytoplasm. In terms of biological role, this protein promotes the GTP-dependent binding of aminoacyl-tRNA to the A-site of ribosomes during protein biosynthesis. This is Elongation factor 1-alpha from Solanum lycopersicum (Tomato).